The sequence spans 49 residues: Large ribosomal subunit protein bL33A (49 aa).

Belongs to the bacterial ribosomal protein bL33 family.

The chain is Large ribosomal subunit protein bL33A from Limosilactobacillus reuteri subsp. reuteri (strain JCM 1112) (Lactobacillus reuteri).